A 284-amino-acid chain; its full sequence is RNase adapter protein RapZ (284 aa).

8 to 15 contacts ATP; it reads GRSGSGKS. 56 to 59 lines the GTP pocket; that stretch reads DVRN. Positions 266–284 are RNA-binding; the sequence is RSRGKNVQSRHRTLEKRKS.

The protein belongs to the RapZ-like family. RapZ subfamily. As to quaternary structure, homotrimer.

Its function is as follows. Modulates the synthesis of GlmS, by affecting the processing and stability of the regulatory small RNA GlmZ. When glucosamine-6-phosphate (GlcN6P) concentrations are high in the cell, RapZ binds GlmZ and targets it to cleavage by RNase E. Consequently, GlmZ is inactivated and unable to activate GlmS synthesis. Under low GlcN6P concentrations, RapZ is sequestered and inactivated by an other regulatory small RNA, GlmY, preventing GlmZ degradation and leading to synthesis of GlmS. The sequence is that of RNase adapter protein RapZ from Cronobacter sakazakii (strain ATCC BAA-894) (Enterobacter sakazakii).